A 274-amino-acid chain; its full sequence is Serine protease 28 (274 aa).

The N-terminal stretch at 1–26 is a signal peptide; it reads MFRLLLLALSCLESTVFMASVSISRS. The region spanning 31–274 is the Peptidase S1 domain; the sequence is IVGGQRTPPG…SLAWIHQHIQ (244 aa). Cys-62 and Cys-78 are disulfide-bonded. His-77 acts as the Charge relay system in catalysis. An N-linked (GlcNAc...) asparagine glycan is attached at Asn-106. The active-site Charge relay system is the Asp-124. Cystine bridges form between Cys-158–Cys-233, Cys-191–Cys-214, and Cys-223–Cys-251. Residue Ser-227 is the Charge relay system of the active site.

This sequence belongs to the peptidase S1 family. Homooligomer, heterodimer and heterotetramer. Able to form homo- and hetero- tetrameric structures. Heterotetramer is far more stable than the homotetramer. In terms of tissue distribution, expressed in embryos throughout the preimplantation period, during blastocyst hatching and embryo outgrowth. Found in uterus especially in glandular epithelium.

The protein resides in the secreted. Inhibited by benzamidine, (4-amidino-phenyl)-methane-sulfonyl (APMSF), N-p-tosyl-L-lysine chloromethylketone (TLCK), gabexate, mesylate, BABIM and trypsin soybean inhibitor (TSI). In terms of biological role, involved in embryo hatching and implantation. This is Serine protease 28 (Prss28) from Mus musculus (Mouse).